Reading from the N-terminus, the 82-residue chain is Large ribosomal subunit protein bL31B (82 aa).

Belongs to the bacterial ribosomal protein bL31 family. Type B subfamily. As to quaternary structure, part of the 50S ribosomal subunit.

This Proteus mirabilis (strain HI4320) protein is Large ribosomal subunit protein bL31B.